A 1438-amino-acid chain; its full sequence is DNA polymerase III PolC-type (1438 aa).

Residues 422–578 form the Exonuclease domain; sequence YVVFDVETTG…YDTEATAYIF (157 aa).

It belongs to the DNA polymerase type-C family. PolC subfamily.

The protein resides in the cytoplasm. The enzyme catalyses DNA(n) + a 2'-deoxyribonucleoside 5'-triphosphate = DNA(n+1) + diphosphate. Required for replicative DNA synthesis. This DNA polymerase also exhibits 3' to 5' exonuclease activity. In Staphylococcus aureus (strain bovine RF122 / ET3-1), this protein is DNA polymerase III PolC-type.